A 141-amino-acid polypeptide reads, in one-letter code: ATP synthase epsilon chain (141 aa).

The protein belongs to the ATPase epsilon chain family. F-type ATPases have 2 components, CF(1) - the catalytic core - and CF(0) - the membrane proton channel. CF(1) has five subunits: alpha(3), beta(3), gamma(1), delta(1), epsilon(1). CF(0) has three main subunits: a, b and c.

It localises to the cell inner membrane. In terms of biological role, produces ATP from ADP in the presence of a proton gradient across the membrane. This chain is ATP synthase epsilon chain, found in Halorhodospira halophila (strain DSM 244 / SL1) (Ectothiorhodospira halophila (strain DSM 244 / SL1)).